Reading from the N-terminus, the 301-residue chain is 4-hydroxy-tetrahydrodipicolinate synthase (301 aa).

A pyruvate-binding site is contributed by Thr46. Tyr134 acts as the Proton donor/acceptor in catalysis. Lys162 (schiff-base intermediate with substrate) is an active-site residue. Ile203 lines the pyruvate pocket.

This sequence belongs to the DapA family. As to quaternary structure, homotetramer; dimer of dimers.

It localises to the cytoplasm. It catalyses the reaction L-aspartate 4-semialdehyde + pyruvate = (2S,4S)-4-hydroxy-2,3,4,5-tetrahydrodipicolinate + H2O + H(+). It functions in the pathway amino-acid biosynthesis; L-lysine biosynthesis via DAP pathway; (S)-tetrahydrodipicolinate from L-aspartate: step 3/4. Its function is as follows. Catalyzes the condensation of (S)-aspartate-beta-semialdehyde [(S)-ASA] and pyruvate to 4-hydroxy-tetrahydrodipicolinate (HTPA). In Anaplasma marginale (strain St. Maries), this protein is 4-hydroxy-tetrahydrodipicolinate synthase.